Consider the following 801-residue polypeptide: Protein SDA1 homolog (801 aa).

4 disordered regions span residues 1–40 (MGKV…ASRF), 495–517 (RKDR…FARP), 536–647 (GEQG…SKNS), and 739–801 (DYKF…RKPQ). The span at 24-40 (KSNAPTEGSNSGKASRF) shows a compositional bias: polar residues. 2 stretches are compositionally biased toward acidic residues: residues 544 to 568 (DGTD…DADE) and 583 to 633 (NDAE…EASE). 2 stretches are compositionally biased toward basic residues: residues 770–779 (NKIRGRNRQR) and 787–801 (SLRH…RKPQ).

It belongs to the SDA1 family.

It is found in the nucleus. Required for 60S pre-ribosomal subunits export to the cytoplasm. Required for normal somatic gonad development and for regulation of germline development and proliferation. In Caenorhabditis elegans, this protein is Protein SDA1 homolog (pro-3).